We begin with the raw amino-acid sequence, 804 residues long: Leucine--tRNA ligase (804 aa).

The 'HIGH' region motif lies at 40-51; sequence PYPSGAGLHVGH. Positions 576-580 match the 'KMSKS' region motif; sequence KMSKS. K579 contributes to the ATP binding site.

The protein belongs to the class-I aminoacyl-tRNA synthetase family.

It localises to the cytoplasm. The catalysed reaction is tRNA(Leu) + L-leucine + ATP = L-leucyl-tRNA(Leu) + AMP + diphosphate. This is Leucine--tRNA ligase from Bacillus subtilis (strain 168).